Here is a 213-residue protein sequence, read N- to C-terminus: ATP phosphoribosyltransferase (213 aa).

Belongs to the ATP phosphoribosyltransferase family. Short subfamily. As to quaternary structure, heteromultimer composed of HisG and HisZ subunits.

The protein localises to the cytoplasm. The enzyme catalyses 1-(5-phospho-beta-D-ribosyl)-ATP + diphosphate = 5-phospho-alpha-D-ribose 1-diphosphate + ATP. It functions in the pathway amino-acid biosynthesis; L-histidine biosynthesis; L-histidine from 5-phospho-alpha-D-ribose 1-diphosphate: step 1/9. Its function is as follows. Catalyzes the condensation of ATP and 5-phosphoribose 1-diphosphate to form N'-(5'-phosphoribosyl)-ATP (PR-ATP). Has a crucial role in the pathway because the rate of histidine biosynthesis seems to be controlled primarily by regulation of HisG enzymatic activity. This Synechococcus sp. (strain RCC307) protein is ATP phosphoribosyltransferase.